The sequence spans 41 residues: Large ribosomal subunit protein bL36 (41 aa).

Belongs to the bacterial ribosomal protein bL36 family.

This chain is Large ribosomal subunit protein bL36, found in Zymomonas mobilis subsp. mobilis (strain ATCC 31821 / ZM4 / CP4).